A 153-amino-acid polypeptide reads, in one-letter code: Membrane-spanning 4-domains subfamily A member 13 (153 aa).

Transmembrane regions (helical) follow at residues 1-21 (MTGI…MGQI), 36-56 (GCSL…RATW), 71-91 (ILCM…LSTF), and 111-131 (VLLS…IFGC).

This sequence belongs to the MS4A family.

It localises to the membrane. In terms of biological role, may be involved in signal transduction as a component of a multimeric receptor complex. In Bos taurus (Bovine), this protein is Membrane-spanning 4-domains subfamily A member 13 (MS4A13).